Reading from the N-terminus, the 593-residue chain is DNA topoisomerase I, mitochondrial (593 aa).

A mitochondrion-targeting transit peptide spans 1 to 43 (MLLLWLRALCRRFQHVPRRVPSRQVSRGSKASRAGWGETSKSS). Interaction with DNA stretches follow at residues 254 to 255 (KY), 317 to 322 (RTGNEK), and 414 to 416 (TAK). Residues 261 to 593 (SSKPKGEMDW…FNQAGEDFEF (333 aa)) form the Topo IB-type catalytic domain. The active-site O-(3'-phospho-DNA)-tyrosine intermediate is Tyr551.

It belongs to the type IB topoisomerase family. The cofactor is Ca(2+). Requires Mg(2+) as cofactor.

The protein localises to the mitochondrion. It carries out the reaction ATP-independent breakage of single-stranded DNA, followed by passage and rejoining.. Functionally, releases the supercoiling and torsional tension of DNA introduced during duplication of mitochondrial DNA by transiently cleaving and rejoining one strand of the DNA duplex. Introduces a single-strand break via transesterification at a target site in duplex DNA. The scissile phosphodiester is attacked by the catalytic tyrosine of the enzyme, resulting in the formation of a DNA-(3'-phosphotyrosyl)-enzyme intermediate and the expulsion of a 5'-OH DNA strand. The free DNA strand then rotates around the intact phosphodiester bond on the opposing strand, thus removing DNA supercoils. Finally, in the religation step, the DNA 5'-OH attacks the covalent intermediate to expel the active-site tyrosine and restore the DNA phosphodiester backbone. The protein is DNA topoisomerase I, mitochondrial (Top1mt) of Rattus norvegicus (Rat).